Reading from the N-terminus, the 503-residue chain is Transcription termination/antitermination protein NusA (503 aa).

The S1 motif domain maps to 140–206 (GELVIGVVKR…RGPQLLVSRT (67 aa)). The region spanning 308–374 (SHTMDIAVNK…FMEKLDVDEE (67 aa)) is the KH domain.

The protein belongs to the NusA family. As to quaternary structure, monomer. Binds directly to the core enzyme of the DNA-dependent RNA polymerase and to nascent RNA.

The protein localises to the cytoplasm. Participates in both transcription termination and antitermination. The protein is Transcription termination/antitermination protein NusA of Coxiella burnetii (strain RSA 493 / Nine Mile phase I).